Consider the following 1186-residue polypeptide: Partner and localizer of BRCA2 (1186 aa).

The interval 1–160 (MDEPPGKPLS…QKRTFISQER (160 aa)) is required for its oligomerization and is important for its focal concentration at DNA damage sites. The interaction with RAD51 stretch occupies residues 1–200 (MDEPPGKPLS…PVTEIRTHLL (200 aa)). The segment at 1-319 (MDEPPGKPLS…SKSGQLPTSS (319 aa)) is interaction with BRCA1. The DNA-binding (with the preference D loop &gt; dsDNA &gt; ssDNA) stretch occupies residues 1–579 (MDEPPGKPLS…EDSLSWSNSA (579 aa)). A coiled-coil region spans residues 9–41 (LSCEEKEKLKEKLAFLKREYSKTLARLQRAQRA). 2 disordered regions span residues 52 to 72 (VEEQ…HSEP) and 95 to 157 (KTSI…TFIS). Over residues 120-141 (RTDDTQEHFPHRVSDPSGEQKQ) the composition is skewed to basic and acidic residues. Positions 143-152 (LPSRRKKQQK) are enriched in basic residues. Residues Ser172 and Ser190 each carry the phosphoserine modification. A disordered region spans residues 252-273 (TLSDSGSSQHLEHIPPKGSSEL). A Phosphoserine modification is found at Ser285. The segment at 346–365 (KEQNQTEKSLKSPSDTLDGR) is disordered. 2 positions are modified to phosphoserine: Ser376 and Ser387. The chAM (Chromatin-association motif); required for chromatin association, mediates nucleosome association stretch occupies residues 395 to 446 (SCTVPEGLLFPAEYYVRTTRSMSNCQRKVAVEAVIQSHLDVKKKGFKNKNKD). The disordered stretch occupies residues 440 to 525 (FKNKNKDASK…RKSACTPASD (86 aa)). At Ser454 the chain carries Phosphoserine. A compositionally biased stretch (polar residues) spans 467–488 (GTCTGQPSSRTSQKLLSLTKVS). Phosphoserine is present on Ser660. Disordered stretches follow at residues 679-698 (PGKS…KTGL) and 774-798 (KQFD…QGQP). Over residues 687–698 (PNSQSQHTKTGL) the composition is skewed to polar residues. The segment at 775-1186 (QFDSSGSPAK…DGNIFVYHYS (412 aa)) is required for interaction with POLH and POLH DNA synthesis stimulation. The residue at position 781 (Ser781) is a Phosphoserine. The segment at 853–1186 (GNLQLVSELK…DGNIFVYHYS (334 aa)) is interaction with RAD51, BRCA2 and POLH. 7 WD repeats span residues 854–915 (NLQL…WHFA), 917–961 (VPVL…QVLL), 962–1009 (KSGN…LMPP), 1010–1052 (EETI…MHID), 1058–1109 (SVCH…MLYC), 1115–1153 (AGRF…LLPP), and 1155–1186 (SDQH…YHYS).

In terms of assembly, homooligomer; dissociated upon DNA damage thus allowing association with BRCA1. Oligomerization is essential for its focal accumulation at DNA breaks. Part of a BRCA complex containing BRCA1, BRCA2 and PALB2. Interacts with BRCA1 and this interaction is essential for its function in HRR. Interacts with RAD51AP1 and MORF4L1/MRG15. Component of the homologous recombination repair (HR) complex composed of ERCC5/XPG, BRCA2, PALB2, DSS1 and RAD51. Within the complex, interacts with ERCC5/XPG and BRCA2. Interacts with BRCA2, RAD51C, RAD51 and XRCC3; the interactions are direct and it may serve as a scaffold for a HR complex containing PALB2, BRCA2, RAD51C, RAD51 and XRCC3. Interacts with POLH; the interaction is direct.

Its subcellular location is the nucleus. Its function is as follows. Plays a critical role in homologous recombination repair (HRR) through its ability to recruit BRCA2 and RAD51 to DNA breaks. Strongly stimulates the DNA strand-invasion activity of RAD51, stabilizes the nucleoprotein filament against a disruptive BRC3-BRC4 polypeptide and helps RAD51 to overcome the suppressive effect of replication protein A (RPA). Functionally cooperates with RAD51AP1 in promoting of D-loop formation by RAD51. Serves as the molecular scaffold in the formation of the BRCA1-PALB2-BRCA2 complex which is essential for homologous recombination. Via its WD repeats is proposed to scaffold a HR complex containing RAD51C and BRCA2 which is thought to play a role in HR-mediated DNA repair. Essential partner of BRCA2 that promotes the localization and stability of BRCA2. Also enables its recombinational repair and checkpoint functions of BRCA2. May act by promoting stable association of BRCA2 with nuclear structures, allowing BRCA2 to escape the effects of proteasome-mediated degradation. Binds DNA with high affinity for D loop, which comprises single-stranded, double-stranded and branched DNA structures. May play a role in the extension step after strand invasion at replication-dependent DNA double-strand breaks; together with BRCA2 is involved in both POLH localization at collapsed replication forks and DNA polymerization activity. This chain is Partner and localizer of BRCA2 (PALB2), found in Homo sapiens (Human).